The following is a 145-amino-acid chain: Peroxide operon regulator (145 aa).

The interval 1 to 78 is DNA-binding; sequence MAAHELKEAL…SGLVKELTYG (78 aa). Zn(2+) is bound by residues cysteine 96, cysteine 99, cysteine 136, and cysteine 139.

The protein belongs to the Fur family. In terms of assembly, homodimer. Requires Mn(2+) as cofactor. The cofactor is Fe(2+). Zn(2+) is required as a cofactor. Post-translationally, possibly oxidized on a cysteine residue; the Cys-SOH formed in response to oxidative signaling may rapidly react with a Cys-SH to form a disulfide bond, leading to the loss of metal ion and inactivation of repressor function. Oxidized PerR can be further reduced by thiol reductants and repressor activity restored.

The protein localises to the cytoplasm. Hydrogen and organic peroxide sensor. Represses the expression of a regulon of peroxide-inducible genes such as katA, ahpC, ahpF, the heme biosynthesis operon (hemAXCDBL), fur, perR, zosA and mrgA. The protein is Peroxide operon regulator (perR) of Bacillus subtilis (strain 168).